A 101-amino-acid polypeptide reads, in one-letter code: ATP synthase subunit c (101 aa).

The next 2 membrane-spanning stretches (helical) occupy residues Ala-31–Gln-51 and Ala-81–Gly-101.

Belongs to the ATPase C chain family. F-type ATPases have 2 components, F(1) - the catalytic core - and F(0) - the membrane proton channel. F(1) has five subunits: alpha(3), beta(3), gamma(1), delta(1), epsilon(1). F(0) has three main subunits: a(1), b(2) and c(10-14). The alpha and beta chains form an alternating ring which encloses part of the gamma chain. F(1) is attached to F(0) by a central stalk formed by the gamma and epsilon chains, while a peripheral stalk is formed by the delta and b chains.

It is found in the cell membrane. F(1)F(0) ATP synthase produces ATP from ADP in the presence of a proton or sodium gradient. F-type ATPases consist of two structural domains, F(1) containing the extramembraneous catalytic core and F(0) containing the membrane proton channel, linked together by a central stalk and a peripheral stalk. During catalysis, ATP synthesis in the catalytic domain of F(1) is coupled via a rotary mechanism of the central stalk subunits to proton translocation. Its function is as follows. Key component of the F(0) channel; it plays a direct role in translocation across the membrane. A homomeric c-ring of between 10-14 subunits forms the central stalk rotor element with the F(1) delta and epsilon subunits. In Mesomycoplasma hyopneumoniae (strain 7448) (Mycoplasma hyopneumoniae), this protein is ATP synthase subunit c.